Consider the following 635-residue polypeptide: DNA-directed RNA polymerase subunit gamma (635 aa).

Zn(2+) is bound by residues Cys-74, Cys-76, Cys-89, and Cys-92. Positions 471, 473, and 475 each coordinate Mg(2+).

It belongs to the RNA polymerase beta' chain family. RpoC1 subfamily. In terms of assembly, in cyanobacteria the RNAP catalytic core is composed of 2 alpha, 1 beta, 1 beta', 1 gamma and 1 omega subunit. When a sigma factor is associated with the core the holoenzyme is formed, which can initiate transcription. Mg(2+) is required as a cofactor. Requires Zn(2+) as cofactor.

It catalyses the reaction RNA(n) + a ribonucleoside 5'-triphosphate = RNA(n+1) + diphosphate. Functionally, DNA-dependent RNA polymerase catalyzes the transcription of DNA into RNA using the four ribonucleoside triphosphates as substrates. This chain is DNA-directed RNA polymerase subunit gamma, found in Prochlorococcus marinus (strain NATL1A).